A 428-amino-acid polypeptide reads, in one-letter code: Glutamate-1-semialdehyde 2,1-aminomutase (428 aa).

Lysine 267 bears the N6-(pyridoxal phosphate)lysine mark.

It belongs to the class-III pyridoxal-phosphate-dependent aminotransferase family. HemL subfamily. In terms of assembly, homodimer. Requires pyridoxal 5'-phosphate as cofactor.

Its subcellular location is the cytoplasm. The catalysed reaction is (S)-4-amino-5-oxopentanoate = 5-aminolevulinate. It functions in the pathway porphyrin-containing compound metabolism; protoporphyrin-IX biosynthesis; 5-aminolevulinate from L-glutamyl-tRNA(Glu): step 2/2. In Desulforapulum autotrophicum (strain ATCC 43914 / DSM 3382 / VKM B-1955 / HRM2) (Desulfobacterium autotrophicum), this protein is Glutamate-1-semialdehyde 2,1-aminomutase.